A 93-amino-acid polypeptide reads, in one-letter code: UPF0223 protein str0998 (93 aa).

It belongs to the UPF0223 family.

This Streptococcus thermophilus (strain CNRZ 1066) protein is UPF0223 protein str0998.